The chain runs to 394 residues: Tubulin-like protein CetZ5 (394 aa).

Residues 10 to 14, 110 to 112, Glu142, Asn169, and Asn187 contribute to the GTP site; these read QAGGN and GTG.

The protein belongs to the CetZ family.

It is found in the cytoplasm. In terms of biological role, involved in cell shape control. In Haloferax volcanii (strain ATCC 29605 / DSM 3757 / JCM 8879 / NBRC 14742 / NCIMB 2012 / VKM B-1768 / DS2) (Halobacterium volcanii), this protein is Tubulin-like protein CetZ5.